The primary structure comprises 416 residues: Tyrosine--tRNA ligase (416 aa).

Position 40 (Tyr40) interacts with L-tyrosine. Positions 45 to 54 (ATAASLHVGH) match the 'HIGH' region motif. L-tyrosine-binding residues include Tyr177 and Gln181. The 'KMSKS' region motif lies at 237 to 241 (KMGKS). ATP is bound at residue Lys240. Residues 351–416 (LSVAHFLVAA…RKKHKLVRLS (66 aa)) form the S4 RNA-binding domain.

The protein belongs to the class-I aminoacyl-tRNA synthetase family. TyrS type 1 subfamily. Homodimer.

It is found in the cytoplasm. It carries out the reaction tRNA(Tyr) + L-tyrosine + ATP = L-tyrosyl-tRNA(Tyr) + AMP + diphosphate + H(+). In terms of biological role, catalyzes the attachment of tyrosine to tRNA(Tyr) in a two-step reaction: tyrosine is first activated by ATP to form Tyr-AMP and then transferred to the acceptor end of tRNA(Tyr). In Cereibacter sphaeroides (strain ATCC 17029 / ATH 2.4.9) (Rhodobacter sphaeroides), this protein is Tyrosine--tRNA ligase.